The chain runs to 134 residues: MSELYRFGISLEKTLIDAFDRHISAQHYKSRSEALRDLIREELLKKQWREGGSVAGAIVMTYDHHKRELLNMLLDIQHDFQETIISTQHVHLDHHHCLEIIAVRGTADQVEKLATQLKVQAGVKHLSLSISTAG.

Ni(2+) contacts are provided by H78, H89, H91, and C97.

The protein belongs to the transcriptional regulatory CopG/NikR family. Ni(2+) serves as cofactor.

In terms of biological role, transcriptional regulator. This Chlorobium limicola (strain DSM 245 / NBRC 103803 / 6330) protein is Putative nickel-responsive regulator.